The following is a 571-amino-acid chain: Hemagglutinin-neuraminidase (571 aa).

Residues 1 to 25 (MEDYSNLSLKSIPKRTCRIIFRTAT) are Intravirion-facing. Residues 26-46 (ILGICTLIVLCSSILHEIIHL) traverse the membrane as a helical segment. The Virion surface segment spans residues 47 to 571 (DVSSGLMDSD…IIPFLRELIP (525 aa)). Disulfide bonds link Cys166–Cys190, Cys180–Cys241, and Cys232–Cys245. Residues 228 to 233 (NRKSCS) form an involved in neuraminidase activity region. N-linked (GlcNAc...) asparagine; by host glycans are attached at residues Asn272, Asn284, and Asn335. Cystine bridges form between Cys338-Cys459, Cys370-Cys380, and Cys453-Cys463. 6 N-linked (GlcNAc...) asparagine; by host glycosylation sites follow: Asn386, Asn454, Asn498, Asn501, Asn517, and Asn522. Residues Cys535 and Cys546 are joined by a disulfide bond.

It belongs to the paramyxoviruses hemagglutinin-neuraminidase family. As to quaternary structure, homotetramer; composed of disulfide-linked homodimers. Interacts with F protein trimer.

It is found in the virion membrane. It localises to the host cell membrane. It carries out the reaction Hydrolysis of alpha-(2-&gt;3)-, alpha-(2-&gt;6)-, alpha-(2-&gt;8)- glycosidic linkages of terminal sialic acid residues in oligosaccharides, glycoproteins, glycolipids, colominic acid and synthetic substrates.. Its function is as follows. Attaches the virus to sialic acid-containing cell receptors and thereby initiating infection. Binding of HN protein to the receptor induces a conformational change that allows the F protein to trigger virion/cell membranes fusion. In terms of biological role, neuraminidase activity ensures the efficient spread of the virus by dissociating the mature virions from the neuraminic acid containing glycoproteins. The chain is Hemagglutinin-neuraminidase (HN) from Homo sapiens (Human).